The sequence spans 71 residues: uncharacterized protein (71 aa).

The segment covering 20-32 has biased composition (polar residues); sequence SSGRRQLTATQPR. A disordered region spans residues 20 to 46; the sequence is SSGRRQLTATQPRSDPESQRGRTSSNR.

This is an uncharacterized protein from Rhizobium leguminosarum.